A 248-amino-acid chain; its full sequence is Granzyme-like protein 1 (248 aa).

A signal peptide spans 1–18 (MNLLLLLLTVSLAPTTEA). A propeptide spans 19–20 (AE) (activation peptide). Residues 21 to 246 (IIGGHEADPH…FLSWIEETMK (226 aa)) form the Peptidase S1 domain. A disulfide bridge links Cys-50 with Cys-66. The active-site Charge relay system is the His-65. A glycan (N-linked (GlcNAc...) asparagine) is linked at Asn-72. Asp-109 (charge relay system) is an active-site residue. Disulfide bonds link Cys-143–Cys-210 and Cys-174–Cys-189. Ser-204 functions as the Charge relay system in the catalytic mechanism.

The protein belongs to the peptidase S1 family. Granzyme subfamily. Duodenum.

Functionally, this enzyme is necessary for target cell lysis in cell-mediated immune responses. The chain is Granzyme-like protein 1 from Rattus norvegicus (Rat).